A 260-amino-acid polypeptide reads, in one-letter code: Phosphate import ATP-binding protein PstB 2 (260 aa).

The ABC transporter domain occupies 9 to 255; it reads IKVKDLSFYY…PLDSRTRDYV (247 aa). 41 to 48 provides a ligand contact to ATP; it reads GPSGCGKS.

Belongs to the ABC transporter superfamily. Phosphate importer (TC 3.A.1.7) family. As to quaternary structure, the complex is composed of two ATP-binding proteins (PstB), two transmembrane proteins (PstC and PstA) and a solute-binding protein (PstS).

It is found in the cell inner membrane. The enzyme catalyses phosphate(out) + ATP + H2O = ADP + 2 phosphate(in) + H(+). In terms of biological role, part of the ABC transporter complex PstSACB involved in phosphate import. Responsible for energy coupling to the transport system. In Nostoc sp. (strain PCC 7120 / SAG 25.82 / UTEX 2576), this protein is Phosphate import ATP-binding protein PstB 2.